We begin with the raw amino-acid sequence, 519 residues long: Iroquois-class homeodomain protein IRX-4 (519 aa).

The segment at residues 143–204 is a DNA-binding region (homeobox; TALE-type); that stretch reads GTRRKNATRE…NARRRLKKEN (62 aa). Residues 204-298 are disordered; sequence NKMTWPPRNK…VPAAPDGPVK (95 aa). Basic and acidic residues predominate over residues 213-222; it reads KCADEKRPYA. 2 stretches are compositionally biased toward acidic residues: residues 223 to 235 and 257 to 267; these read EGEE…EEAR and LSDLDDFDPLE.

Belongs to the TALE/IRO homeobox family. As to quaternary structure, interacts with the vitamin D receptor VDR but doesn't affect its transactivation activity. Predominantly expressed in cardiac ventricles.

Its subcellular location is the nucleus. In terms of biological role, likely to be an important mediator of ventricular differentiation during cardiac development. The sequence is that of Iroquois-class homeodomain protein IRX-4 (IRX4) from Homo sapiens (Human).